A 466-amino-acid chain; its full sequence is Communesin N16 acyltransferase cnsK (466 aa).

This sequence belongs to the fumigaclavine B O-acetyltransferase family.

It functions in the pathway alkaloid biosynthesis. Communesin N16 acyltransferase; part of the gene cluster that mediates the biosynthesis of communesins, a prominent class of indole alkaloids with great potential as pharmaceuticals. Communesins are biosynthesized by the coupling of tryptamine and aurantioclavine, two building blocks derived from L-tryptophan. The L-tryptophan decarboxylase cnsB converts L-tryptophan to tryptamine, whereas the tryptophan dimethylallyltransferase cnsF converts L-tryptophan to 4-dimethylallyl tryptophan which is further transformed to aurantioclavine by the aurantioclavine synthase cnsA, probably aided by the catalase cnsD. The cytochrome P450 monooxygenase cnsC catalyzes the heterodimeric coupling between the two different indole moieties, tryptamine and aurantioclavine, to construct vicinal quaternary stereocenters and yield the heptacyclic communesin scaffold. The O-methyltransferase cnsE then methylates the communesin scaffold to produce communesin K, the simplest characterized communesin that contains the heptacyclic core. The dioxygenase cnsJ converts communesin K into communesin I. Acylation to introduce the hexadienyl group at position N16 of communesin I by the acyltransferase cnsK leads to the production of communesin B. The hexadienyl group is produced by the highly reducing polyketide synthase cnsI, before being hydrolytically removed from cnsI by the serine hydrolase cnsH, converted into hexadienyl-CoA by the CoA ligase cnsG, and then transferred to communesin I by cnsK. Surprisingly, cnsK may also be a promiscuous acyltransferase that can tolerate a range of acyl groups, including acetyl-, propionyl-, and butyryl-CoA, which lead to communesins A, G and H respectively. The roles of the alpha-ketoglutarate-dependent dioxygenases cnsM and cnsP have still to be determined. This is Communesin N16 acyltransferase cnsK from Penicillium expansum (Blue mold rot fungus).